Consider the following 367-residue polypeptide: UDP-N-acetylglucosamine--N-acetylmuramyl-(pentapeptide) pyrophosphoryl-undecaprenol N-acetylglucosamine transferase (367 aa).

Residues 15-17, N126, R169, S197, and Q298 each bind UDP-N-acetyl-alpha-D-glucosamine; that span reads TGG.

Belongs to the glycosyltransferase 28 family. MurG subfamily.

It localises to the cell inner membrane. It carries out the reaction di-trans,octa-cis-undecaprenyl diphospho-N-acetyl-alpha-D-muramoyl-L-alanyl-D-glutamyl-meso-2,6-diaminopimeloyl-D-alanyl-D-alanine + UDP-N-acetyl-alpha-D-glucosamine = di-trans,octa-cis-undecaprenyl diphospho-[N-acetyl-alpha-D-glucosaminyl-(1-&gt;4)]-N-acetyl-alpha-D-muramoyl-L-alanyl-D-glutamyl-meso-2,6-diaminopimeloyl-D-alanyl-D-alanine + UDP + H(+). It functions in the pathway cell wall biogenesis; peptidoglycan biosynthesis. Its function is as follows. Cell wall formation. Catalyzes the transfer of a GlcNAc subunit on undecaprenyl-pyrophosphoryl-MurNAc-pentapeptide (lipid intermediate I) to form undecaprenyl-pyrophosphoryl-MurNAc-(pentapeptide)GlcNAc (lipid intermediate II). The sequence is that of UDP-N-acetylglucosamine--N-acetylmuramyl-(pentapeptide) pyrophosphoryl-undecaprenol N-acetylglucosamine transferase from Bradyrhizobium sp. (strain BTAi1 / ATCC BAA-1182).